Here is a 324-residue protein sequence, read N- to C-terminus: Melanoma-associated antigen B16 (324 aa).

The segment covering 1–15 has biased composition (basic and acidic residues); it reads MSQDQESPRCTHDQH. 2 disordered regions span residues 1 to 22 and 39 to 108; these read MSQD…FSET and LSSS…PRNV. Over residues 70–81 the composition is skewed to low complexity; that stretch reads SSSIAVTTTSSS. Over residues 82–95 the composition is skewed to acidic residues; the sequence is ESDEASSNQEEEDS. Positions 113–312 constitute an MAGE domain; the sequence is LDQKVAFLVN…HSFPSQYAEA (200 aa).

In Homo sapiens (Human), this protein is Melanoma-associated antigen B16 (MAGEB16).